A 179-amino-acid polypeptide reads, in one-letter code: X-linked lymphocyte-regulated protein 5C (179 aa).

The span at 1–11 shows a compositional bias: basic and acidic residues; the sequence is MSNKEQKDMKK. Residues 1 to 75 are disordered; that stretch reads MSNKEQKDMK…MQDFKGDDGT (75 aa). A compositionally biased stretch (low complexity) spans 42–53; the sequence is GTSGMGSHSSGS. A compositionally biased stretch (basic and acidic residues) spans 56–75; that stretch reads QEAREPVQKKMQDFKGDDGT. Residues 146 to 175 adopt a coiled-coil conformation; it reads ITQQQMKILQTAIEDHETKLKNAKDMCDTF.

This sequence belongs to the XLR/SYCP3 family. Expressed in testis (at protein level). Also expressed in ovary. Not detected in other tissues tested.

It is found in the nucleus. It localises to the chromosome. This Mus musculus (Mouse) protein is X-linked lymphocyte-regulated protein 5C.